A 282-amino-acid chain; its full sequence is Pantothenate synthetase (282 aa).

Residue 30–37 (MGYLHEGH) participates in ATP binding. His-37 (proton donor) is an active-site residue. Gln-61 contributes to the (R)-pantoate binding site. A beta-alanine-binding site is contributed by Gln-61. Residue 147–150 (GEKD) participates in ATP binding. Position 153 (Gln-153) interacts with (R)-pantoate. ATP contacts are provided by residues Ile-176 and 184-187 (KSSR).

This sequence belongs to the pantothenate synthetase family. In terms of assembly, homodimer.

It is found in the cytoplasm. The enzyme catalyses (R)-pantoate + beta-alanine + ATP = (R)-pantothenate + AMP + diphosphate + H(+). Its pathway is cofactor biosynthesis; (R)-pantothenate biosynthesis; (R)-pantothenate from (R)-pantoate and beta-alanine: step 1/1. Functionally, catalyzes the condensation of pantoate with beta-alanine in an ATP-dependent reaction via a pantoyl-adenylate intermediate. The protein is Pantothenate synthetase of Enterococcus faecalis (strain ATCC 700802 / V583).